Here is a 569-residue protein sequence, read N- to C-terminus: Proline--tRNA ligase (569 aa).

The protein belongs to the class-II aminoacyl-tRNA synthetase family. ProS type 1 subfamily. In terms of assembly, homodimer.

It localises to the cytoplasm. It carries out the reaction tRNA(Pro) + L-proline + ATP = L-prolyl-tRNA(Pro) + AMP + diphosphate. Functionally, catalyzes the attachment of proline to tRNA(Pro) in a two-step reaction: proline is first activated by ATP to form Pro-AMP and then transferred to the acceptor end of tRNA(Pro). As ProRS can inadvertently accommodate and process non-cognate amino acids such as alanine and cysteine, to avoid such errors it has two additional distinct editing activities against alanine. One activity is designated as 'pretransfer' editing and involves the tRNA(Pro)-independent hydrolysis of activated Ala-AMP. The other activity is designated 'posttransfer' editing and involves deacylation of mischarged Ala-tRNA(Pro). The misacylated Cys-tRNA(Pro) is not edited by ProRS. The chain is Proline--tRNA ligase from Campylobacter hominis (strain ATCC BAA-381 / DSM 21671 / CCUG 45161 / LMG 19568 / NCTC 13146 / CH001A).